A 569-amino-acid polypeptide reads, in one-letter code: Zinc finger and BTB domain-containing protein 7A (569 aa).

The region spanning 34-101 (CDVVILVEGR…AYTATLTVST (68 aa)) is the BTB domain. A disordered region spans residues 214–304 (YGPGPPADRP…LSGAAEGEDG (91 aa)). The interval 275–569 (EEEAAALSEA…VATAEGNFAT (295 aa)) is mediates interaction with KHDRBS1. Residues 279-288 (AALSEAAPEP) are compositionally biased toward low complexity. Ser-331 and Ser-335 each carry phosphoserine. A mediates interaction with RELA region spans residues 343–569 (MDYYLKYFSG…VATAEGNFAT (227 aa)). The segment at 371–569 (RAKAFQKCPI…VATAEGNFAT (199 aa)) is mediates interaction with SMAD4. 2 C2H2-type zinc fingers span residues 376–398 (QKCPICEKVIQGAGKLPRHIRTH) and 404–426 (YECNICKVRFTRQDKLKVHMRKH). Lys-430 participates in a covalent cross-link: Glycyl lysine isopeptide (Lys-Gly) (interchain with G-Cter in SUMO2). The C2H2-type 3 zinc finger occupies 432 to 454 (YLCQQCGAAFAHNYDLKNHMRVH). A C2H2-type 4; atypical zinc finger spans residues 460-484 (YQCDSCCKTFVRSDHLHRHLKKDGC). Residues 480 to 569 (KKDGCNGVPS…VATAEGNFAT (90 aa)) form a disordered region. Over residues 498–519 (RGVPPDVPAGAGAPPGLPDAPR) the composition is skewed to low complexity. Lys-527 is covalently cross-linked (Glycyl lysine isopeptide (Lys-Gly) (interchain with G-Cter in SUMO2)). Ser-537 is subject to Phosphoserine. Positions 548 to 557 (GSGGDDGAGG) are enriched in gly residues.

In terms of assembly, homodimer. Interacts with BCL6. Interacts with RELA; involved in the control by RELA of the accessibility of target gene promoters. Interacts with AR (via NR LBD domain); the interaction is direct and androgen-dependent. Interacts with NCOR1. Interacts with NCOR2. Interacts with SMAD4; the interaction is direct and stimulated by TGFB1. Interacts with HDAC1. Interacts with SP1; ZBTB7A prevents the binding to GC-rich motifs in promoters and represses the transcriptional activity of SP1. Interacts with the DNA-dependent protein kinase complex/DNA-PKc. Interacts with KHDRBS1; negatively regulates KHDRBS1 splicing activity. Post-translationally, sumoylated. Undergoes sumoylation with SUMO1 that may regulate its transcriptional activity. Widely expressed. In normal thymus, expressed in medullary epithelial cells and Hassle's corpuscles (at protein level). In the spleen, mainly expressed in the white pulp germinal centers (at protein level). Up-regulated in thymic lymphomas.

It is found in the nucleus. Its function is as follows. Transcription factor that represses the transcription of a wide range of genes involved in cell proliferation and differentiation. Directly and specifically binds to the consensus sequence 5'-[GA][CA]GACCCCCCCCC-3' and represses transcription both by regulating the organization of chromatin and through the direct recruitment of transcription factors to gene regulatory regions. Negatively regulates SMAD4 transcriptional activity in the TGF-beta signaling pathway through these two mechanisms. That is, recruits the chromatin regulator HDAC1 to the SMAD4-DNA complex and in parallel prevents the recruitment of the transcriptional activators CREBBP and EP300. Collaborates with transcription factors like RELA to modify the accessibility of gene transcription regulatory regions to secondary transcription factors. Also directly interacts with transcription factors like SP1 to prevent their binding to DNA. Functions as an androgen receptor/AR transcriptional corepressor by recruiting NCOR1 and NCOR2 to the androgen response elements/ARE on target genes. Thereby, negatively regulates androgen receptor signaling and androgen-induced cell proliferation. Involved in the switch between fetal and adult globin expression during erythroid cells maturation. Through its interaction with the NuRD complex regulates chromatin at the fetal globin genes to repress their transcription. Specifically represses the transcription of the tumor suppressor ARF isoform from the CDKN2A gene. Efficiently abrogates E2F1-dependent CDKN2A transactivation. Regulates chondrogenesis through the transcriptional repression of specific genes via a mechanism that also requires histone deacetylation. Regulates cell proliferation through the transcriptional regulation of genes involved in glycolysis. Involved in adipogenesis through the regulation of genes involved in adipocyte differentiation. Plays a key role in the differentiation of lymphoid progenitors into B and T lineages. Promotes differentiation towards the B lineage by inhibiting the T-cell instructive Notch signaling pathway through the specific transcriptional repression of Notch downstream target genes. Also regulates osteoclast differentiation. May also play a role, independently of its transcriptional activity, in double-strand break repair via classical non-homologous end joining/cNHEJ. Recruited to double-strand break sites on damage DNA, interacts with the DNA-dependent protein kinase complex and directly regulates its stability and activity in DNA repair. May also modulate the splicing activity of KHDRBS1 toward BCL2L1 in a mechanism which is histone deacetylase-dependent and thereby negatively regulates the pro-apoptotic effect of KHDRBS1. The chain is Zinc finger and BTB domain-containing protein 7A from Mus musculus (Mouse).